The primary structure comprises 264 residues: Tryptophan synthase alpha chain (264 aa).

Residues E45 and D56 each act as proton acceptor in the active site.

This sequence belongs to the TrpA family. Tetramer of two alpha and two beta chains.

It carries out the reaction (1S,2R)-1-C-(indol-3-yl)glycerol 3-phosphate + L-serine = D-glyceraldehyde 3-phosphate + L-tryptophan + H2O. It functions in the pathway amino-acid biosynthesis; L-tryptophan biosynthesis; L-tryptophan from chorismate: step 5/5. Its function is as follows. The alpha subunit is responsible for the aldol cleavage of indoleglycerol phosphate to indole and glyceraldehyde 3-phosphate. This is Tryptophan synthase alpha chain from Leptospira interrogans serogroup Icterohaemorrhagiae serovar copenhageni (strain Fiocruz L1-130).